The primary structure comprises 394 residues: Proliferation-associated protein 2G4 (394 aa).

Ser-2 carries the N-acetylserine modification. Ser-2 is modified (phosphoserine). The tract at residues 2–48 (SGEDEQQEQTIAEDLVVTKYKMGGDIANRVLRSLVEASSSGVSVLSL) is necessary for nucleolar localization. The segment at 46–54 (LSLCEKGDA) is RNA-binding. A Glycyl lysine isopeptide (Lys-Gly) (interchain with G-Cter in SUMO2) cross-link involves residue Lys-298. A necessary for nucleolar localization region spans residues 301-394 (LLQPFNVLYE…ETLEENEAGD (94 aa)). Ser-335 is subject to Phosphoserine. The segment at 358 to 394 (LQSSASRKTQKKKKKKASKTAENATSGETLEENEAGD) is disordered. The residue at position 361 (Ser-361) is a Phosphoserine; by PKC/PRKCD. Residues 361 to 375 (SASRKTQKKKKKKAS) form an interaction with RNA region. The segment covering 365 to 375 (KTQKKKKKKAS) has biased composition (basic residues). 2 positions are modified to phosphothreonine: Thr-366 and Thr-386.

The protein belongs to the peptidase M24 family. Isoform 2 interacts with the cytoplasmic domain of non-phosphorylated ERBB3; the interaction requires PKC activity. Interacts with AR. Treatment with HRG leads to dissociation from ERBB3 and increases association with AR. Interacts with NCL/nucleolin. Component of a ribonucleoprotein complex containing at least PA2G4, NCL, TOP1, PABPC2, RPLP0, acetylated histone H1 (HIST1H1A or H1F1), histone H1 2/4, RPL4, RPL8, RPL15, RPL18, RPL18A, RPL21, RPL11, RPL12, RPL28, RPL27, RPLP2 and RPL24. Interacts with HDAC2. Interacts with RB1; the interaction is enhanced upon PA2G4 dephosphorylation. Interacts with AKT1. Isoform 1 and isoform 2 interact with RNF20. Isoform 2 interacts with HUWE1. Interacts with DNAJC21. In terms of processing, phosphorylated on serine and threonine residues. Phosphorylation is enhanced by HRG treatment. Basal phosphorylation is PKC-dependent and HRG-induced phosphorylation is predominantly PKC-independent. Phosphorylation at Ser-361 by PKC/PRKCD regulates its nucleolar localization. Post-translationally, in cancer cells, isoform 2 is polyubiquitinated leading to its proteasomal degradation and phosphorylation by PKC/PRKCD enhances polyubiquitination. In terms of tissue distribution, isoform 2 is undetectable whereas isoform 1 is strongly expressed in cancer cells (at protein level). Isoform 1 and isoform 2 are widely expressed, including heart, brain, lung, pancreas, skeletal muscle, kidney, placenta and liver.

It is found in the cytoplasm. The protein resides in the nucleus. The protein localises to the nucleolus. Its function is as follows. May play a role in a ERBB3-regulated signal transduction pathway. Seems be involved in growth regulation. Acts a corepressor of the androgen receptor (AR) and is regulated by the ERBB3 ligand neuregulin-1/heregulin (HRG). Inhibits transcription of some E2F1-regulated promoters, probably by recruiting histone acetylase (HAT) activity. Binds RNA. Associates with 28S, 18S and 5.8S mature rRNAs, several rRNA precursors and probably U3 small nucleolar RNA. May be involved in regulation of intermediate and late steps of rRNA processing. May be involved in ribosome assembly. Mediates cap-independent translation of specific viral IRESs (internal ribosomal entry site). Regulates cell proliferation, differentiation, and survival. Isoform 1 suppresses apoptosis whereas isoform 2 promotes cell differentiation. The chain is Proliferation-associated protein 2G4 (PA2G4) from Homo sapiens (Human).